A 151-amino-acid polypeptide reads, in one-letter code: 3-hydroxyacyl-[acyl-carrier-protein] dehydratase FabZ (151 aa).

His-54 is a catalytic residue.

Belongs to the thioester dehydratase family. FabZ subfamily.

It localises to the cytoplasm. It catalyses the reaction a (3R)-hydroxyacyl-[ACP] = a (2E)-enoyl-[ACP] + H2O. In terms of biological role, involved in unsaturated fatty acids biosynthesis. Catalyzes the dehydration of short chain beta-hydroxyacyl-ACPs and long chain saturated and unsaturated beta-hydroxyacyl-ACPs. The chain is 3-hydroxyacyl-[acyl-carrier-protein] dehydratase FabZ from Blochmanniella floridana.